A 727-amino-acid chain; its full sequence is Translation initiation factor IF-2, mitochondrial (727 aa).

The N-terminal 29 residues, 1 to 29 (MNQKLLKLENLLRFHTIYRQLHSLCQRRA), are a transit peptide targeting the mitochondrion. In terms of domain architecture, tr-type G spans 178-348 (PRSPVVTIMG…VALAEMLELK (171 aa)). A G1 region spans residues 187-194 (GHVDHGKT). Residue 187 to 194 (GHVDHGKT) participates in GTP binding. Residues 212-216 (GITQH) are G2. Residues 234-237 (DTPG) and 288-291 (NKCD) contribute to the GTP site. Residues 234-237 (DTPG) are G3. The G4 stretch occupies residues 288-291 (NKCD). A G5 region spans residues 324–326 (SAL). Thr-688 is modified (phosphothreonine).

It belongs to the TRAFAC class translation factor GTPase superfamily. Classic translation factor GTPase family. IF-2 subfamily. In terms of assembly, monomer. As to expression, expressed in all tissues examined. Highest level in skeletal muscle.

The protein resides in the mitochondrion. Functionally, one of the essential components for the initiation of protein synthesis. Protects formylmethionyl-tRNA from spontaneous hydrolysis and promotes its binding to the 30S ribosomal subunits. Also involved in the hydrolysis of GTP during the formation of the 70S ribosomal complex. In Homo sapiens (Human), this protein is Translation initiation factor IF-2, mitochondrial (MTIF2).